A 610-amino-acid polypeptide reads, in one-letter code: UvrABC system protein C (610 aa).

Positions 16 to 94 constitute a GIY-YIG domain; the sequence is SQPGVYRMYD…IKLYQPRYNV (79 aa). One can recognise a UVR domain in the interval 204–239; the sequence is DQVLTQLISRMETASQNLEFEEAARIRDQIQAVRRV.

The protein belongs to the UvrC family. Interacts with UvrB in an incision complex.

The protein resides in the cytoplasm. The UvrABC repair system catalyzes the recognition and processing of DNA lesions. UvrC both incises the 5' and 3' sides of the lesion. The N-terminal half is responsible for the 3' incision and the C-terminal half is responsible for the 5' incision. The polypeptide is UvrABC system protein C (Escherichia coli (strain UTI89 / UPEC)).